The following is an 85-amino-acid chain: Double gene block protein 2 (85 aa).

The Lumenal portion of the chain corresponds to 1-2 (MK). A helical transmembrane segment spans residues 3-23 (VLLVTGVLGLLLLIKWKSQST). Residues 24–36 (STSNQTCQCPTSP) are Cytoplasmic-facing. A helical membrane pass occupies residues 37-56 (WVIYAFYNSLSLVLLLCHLI). Residues 57–85 (PEIKPIHTSYNTHDSSKQQHISINTGNGK) lie on the Lumenal side of the membrane.

It belongs to the carmovirus double gene block protein 2 family.

It localises to the host endoplasmic reticulum membrane. In terms of biological role, cell-to-cell movement function. The protein is Double gene block protein 2 of Turnip crinkle virus (TCV).